Reading from the N-terminus, the 74-residue chain is Large ribosomal subunit protein uL29 (74 aa).

Belongs to the universal ribosomal protein uL29 family.

The polypeptide is Large ribosomal subunit protein uL29 (Cyanothece sp. (strain PCC 7425 / ATCC 29141)).